The chain runs to 199 residues: Shikimate kinase (199 aa).

Residue 14-19 (GSGKST) coordinates ATP. Position 18 (Ser-18) interacts with Mg(2+). Residues Asp-36, Arg-60, and Gly-82 each coordinate substrate. An ATP-binding site is contributed by Arg-120. Arg-147 is a binding site for substrate.

It belongs to the shikimate kinase family. In terms of assembly, monomer. Mg(2+) is required as a cofactor.

It localises to the cytoplasm. It carries out the reaction shikimate + ATP = 3-phosphoshikimate + ADP + H(+). The protein operates within metabolic intermediate biosynthesis; chorismate biosynthesis; chorismate from D-erythrose 4-phosphate and phosphoenolpyruvate: step 5/7. In terms of biological role, catalyzes the specific phosphorylation of the 3-hydroxyl group of shikimic acid using ATP as a cosubstrate. The polypeptide is Shikimate kinase (Chlorobium limicola (strain DSM 245 / NBRC 103803 / 6330)).